The sequence spans 92 residues: Acylphosphatase (92 aa).

One can recognise an Acylphosphatase-like domain in the interval 5–92; the sequence is CIAAYVYGVV…TPFETFKIRY (88 aa). Active-site residues include Arg20 and Asn38.

The protein belongs to the acylphosphatase family.

The enzyme catalyses an acyl phosphate + H2O = a carboxylate + phosphate + H(+). The protein is Acylphosphatase (acyP) of Yersinia enterocolitica serotype O:8 / biotype 1B (strain NCTC 13174 / 8081).